The chain runs to 520 residues: Amine oxidase [flavin-containing] B (520 aa).

N-acetylserine is present on Ser2. At 2–489 the chain is on the cytoplasmic side; it reads SNKCDVVVVG…TFLERHLPSV (488 aa). Lys52 carries the post-translational modification N6-acetyllysine. Cys397 carries the post-translational modification S-8alpha-FAD cysteine. Residues 490–516 form a helical; Anchor for type IV membrane protein membrane-spanning segment; the sequence is PGLLRLIGLTTIFSATALGFLAHKRGL. The Mitochondrial intermembrane portion of the chain corresponds to 517 to 520; it reads LVRV.

In terms of assembly, monomer, homo- or heterodimer (containing two subunits of similar size). Each subunit contains a covalently bound flavin. Enzymatically active as monomer. The cofactor is FAD.

Its subcellular location is the mitochondrion outer membrane. It catalyses the reaction a secondary aliphatic amine + O2 + H2O = a primary amine + an aldehyde + H2O2. It carries out the reaction (R)-adrenaline + O2 + H2O = (R)-3,4-dihydroxymandelaldehyde + methylamine + H2O2. The enzyme catalyses a primary methyl amine + O2 + H2O = an aldehyde + H2O2 + NH4(+). The catalysed reaction is benzylamine + O2 + H2O = benzaldehyde + H2O2 + NH4(+). It catalyses the reaction dopamine + O2 + H2O = 3,4-dihydroxyphenylacetaldehyde + H2O2 + NH4(+). It carries out the reaction tyramine + O2 + H2O = (4-hydroxyphenyl)acetaldehyde + H2O2 + NH4(+). The enzyme catalyses (R)-noradrenaline + O2 + H2O = (R)-3,4-dihydroxymandelaldehyde + H2O2 + NH4(+). The catalysed reaction is 2-phenylethylamine + O2 + H2O = 2-phenylacetaldehyde + H2O2 + NH4(+). It catalyses the reaction N-acetylputrescine + O2 + H2O = 4-acetamidobutanal + H2O2 + NH4(+). With respect to regulation, inhibited by deprenyl. Catalyzes the oxidative deamination of primary and some secondary amines such as neurotransmitters, and exogenous amines including the tertiary amine, neurotoxin 1-methyl-4-phenyl-1,2,3,6-tetrahydropyridine (MPTP), with concomitant reduction of oxygen to hydrogen peroxide and participates in the metabolism of neuroactive and vasoactive amines in the central nervous system and peripheral tissues. Preferentially degrades benzylamine and phenylethylamine. The chain is Amine oxidase [flavin-containing] B from Homo sapiens (Human).